A 117-amino-acid polypeptide reads, in one-letter code: Transcription elongation factor SPT4 (117 aa).

Positions 1 to 40 (MSLETVPKDLRHLRACLLCSLVKTIDQFEYDGCDNCESYL) are interaction with SUPT5H. The C4-type zinc finger occupies 16–36 (CLLCSLVKTIDQFEYDGCDNC).

The protein belongs to the SPT4 family. Interacts with SUPT5H to form the DSIF complex. DSIF interacts with RNA polymerase II and with the positive transcription elongation factor b complex (P-TEFb complex), which is composed of CDK9 and cyclin-T.

It is found in the nucleus. May function as a component of the DRB sensitivity-inducing factor complex (DSIF complex), which regulates transcription elongation by RNA polymerase II. Probably enhances transcriptional pausing at sites proximal to the promoter, which may facilitate the assembly of an elongation competent RNA polymerase II complex. Also acts to stimulate transcriptional elongation at low nucleotide concentrations. Regulation of transcriptional elongation by this protein is required for the expression of genes which control neuronal development. The polypeptide is Transcription elongation factor SPT4 (supt4h1) (Danio rerio (Zebrafish)).